The chain runs to 66 residues: Large ribosomal subunit protein bL35 (66 aa).

Belongs to the bacterial ribosomal protein bL35 family.

The sequence is that of Large ribosomal subunit protein bL35 from Lysinibacillus sphaericus (strain C3-41).